The following is an 816-amino-acid chain: Leucine--tRNA ligase (816 aa).

Residues 42 to 52 (PYPSGSLHMGH) carry the 'HIGH' region motif. The 'KMSKS' region motif lies at 574–578 (KMSKS). Residue lysine 577 participates in ATP binding.

The protein belongs to the class-I aminoacyl-tRNA synthetase family.

The protein resides in the cytoplasm. The enzyme catalyses tRNA(Leu) + L-leucine + ATP = L-leucyl-tRNA(Leu) + AMP + diphosphate. This is Leucine--tRNA ligase from Ruthia magnifica subsp. Calyptogena magnifica.